A 465-amino-acid chain; its full sequence is Ribulose bisphosphate carboxylase large chain (465 aa).

Lysine 4 bears the N6,N6,N6-trimethyllysine mark. The substrate site is built by asparagine 113 and threonine 163. Lysine 165 serves as the catalytic Proton acceptor. Lysine 167 lines the substrate pocket. Residues lysine 191, aspartate 193, and glutamate 194 each coordinate Mg(2+). An N6-carboxylysine modification is found at lysine 191. Histidine 284 serves as the catalytic Proton acceptor. The substrate site is built by arginine 285, histidine 317, and serine 369.

This sequence belongs to the RuBisCO large chain family. Type I subfamily. Heterohexadecamer of 8 large chains and 8 small chains; disulfide-linked. The disulfide link is formed within the large subunit homodimers. Mg(2+) serves as cofactor. In terms of processing, the disulfide bond which can form in the large chain dimeric partners within the hexadecamer appears to be associated with oxidative stress and protein turnover.

Its subcellular location is the plastid. The protein localises to the chloroplast. The enzyme catalyses 2 (2R)-3-phosphoglycerate + 2 H(+) = D-ribulose 1,5-bisphosphate + CO2 + H2O. It catalyses the reaction D-ribulose 1,5-bisphosphate + O2 = 2-phosphoglycolate + (2R)-3-phosphoglycerate + 2 H(+). Its function is as follows. RuBisCO catalyzes two reactions: the carboxylation of D-ribulose 1,5-bisphosphate, the primary event in carbon dioxide fixation, as well as the oxidative fragmentation of the pentose substrate in the photorespiration process. Both reactions occur simultaneously and in competition at the same active site. The chain is Ribulose bisphosphate carboxylase large chain from Securidaca diversifolia (Easter flower).